Here is a 366-residue protein sequence, read N- to C-terminus: Neuropeptide Y receptor type 1 (366 aa).

Residues 1–39 (MNFSTYFENLSVPNNISGNITFPISEDCALPLPMIFTLA) lie on the Extracellular side of the membrane. Residues N2, N9, and N15 are each glycosylated (N-linked (GlcNAc...) asparagine). A helical membrane pass occupies residues 40–60 (LAYGAVIILGLSGNLALIIII). Over 61 to 82 (LKQKEMRNVTNILIVNLSFSDL) the chain is Cytoplasmic. The chain crosses the membrane as a helical span at residues 83 to 103 (LATIMCLPFTLIYTLMDHWIF). Residues 104–111 (GEVMCKLN) are Extracellular-facing. C108 and C193 are disulfide-bonded. A helical transmembrane segment spans residues 112 to 132 (EYIQCVSVTVSIFSLVLIAIE). Topologically, residues 133 to 149 (RHQLIINPRGWRPNNRH) are cytoplasmic. The helical transmembrane segment at 150 to 170 (ACFGITVIWGFAMACSTPLMM) threads the bilayer. Residues 171–203 (YSVLTDEPFKNISLDSYIGKYVCLEDFPEDKFR) lie on the Extracellular side of the membrane. The N-linked (GlcNAc...) asparagine glycan is linked to N181. The chain crosses the membrane as a helical span at residues 204 to 224 (LSYTTLLFILQYLGPLCFIFV). Over 225–260 (CYTKIFLRLKRRNNMMDKIRDNKYRSSETKRINIML) the chain is Cytoplasmic. A helical transmembrane segment spans residues 261-281 (LSIVVGFALCWLPFFIFNLVF). At 282-294 (DWNHEAVATCNHN) the chain is on the extracellular side. The chain crosses the membrane as a helical span at residues 295–315 (LLFLICHLTAMISTCVNPIFY). The Cytoplasmic segment spans residues 316-366 (GFLNKNFQRDLQFFFNFCDFRSREDDYETIAMSTMHTDVSKTSLKQASPIA). The S-palmitoyl cysteine moiety is linked to residue C333.

The protein belongs to the G-protein coupled receptor 1 family.

The protein resides in the cell membrane. Receptor for neuropeptide Y and peptide YY. In Xenopus laevis (African clawed frog), this protein is Neuropeptide Y receptor type 1 (npy1r).